The sequence spans 534 residues: Lysophosphatidylcholine acyltransferase 1 (534 aa).

The disordered stretch occupies residues 1-25; sequence MRLRGRGPRAAPSSSSGAGDARRLA. Residues 1–57 lie on the Cytoplasmic side of the membrane; that stretch reads MRLRGRGPRAAPSSSSGAGDARRLAPPGRNPFVHELRLSALQKAQVAFMTLTLFPIR. A compositionally biased stretch (low complexity) spans 8–19; the sequence is PRAAPSSSSGAG. A helical; Signal-anchor for type II membrane protein transmembrane segment spans residues 58–78; sequence LLFAAFMMLLAWPFALLASLG. Over 79 to 534 the chain is Lumenal; the sequence is PPDKEPEQPL…GRKNSCKKAD (456 aa). The HXXXXD motif motif lies at 135 to 140; sequence HSSYFD. 2 consecutive EF-hand domains span residues 379-414 and 451-486; these read PVSDALEDMFSLFDESGGGEIDLREYVVALSVVCRP and VSELTVTDLFQAIDQEDKGRITFDDFCGFAEMYPDY. Residues aspartate 392, serine 394, glutamate 398, and glutamate 403 each contribute to the Ca(2+) site. The Di-lysine motif motif lies at 531–534; sequence KKAD.

This sequence belongs to the 1-acyl-sn-glycerol-3-phosphate acyltransferase family. In terms of tissue distribution, predominantly expressed in lung where it is enriched in alveolar type II cells. Expressed at lower levels in spleen and brain. Also detected in erythroleukemic cells and reticulocytes. Weakly or not expressed in other tissues.

The protein localises to the endoplasmic reticulum membrane. Its subcellular location is the golgi apparatus membrane. The protein resides in the cell membrane. It is found in the lipid droplet. The catalysed reaction is a 1-acyl-sn-glycero-3-phosphocholine + an acyl-CoA = a 1,2-diacyl-sn-glycero-3-phosphocholine + CoA. It carries out the reaction a 1-O-alkyl-sn-glycero-3-phosphocholine + acetyl-CoA = a 1-O-alkyl-2-acetyl-sn-glycero-3-phosphocholine + CoA. The enzyme catalyses a 1-acyl-sn-glycero-3-phosphate + an acyl-CoA = a 1,2-diacyl-sn-glycero-3-phosphate + CoA. It catalyses the reaction a 1-O-(1Z-alkenyl)-sn-glycero-3-phosphocholine + an acyl-CoA = a 1-O-(1Z-alkenyl)-2-acyl-sn-glycero-3-phosphocholine + CoA. The catalysed reaction is 1-acyl-sn-glycero-3-phospho-(1'-sn-glycerol) + an acyl-CoA = a 1,2-diacyl-sn-glycero-3-phospho-(1'-sn-glycerol) + CoA. It carries out the reaction 1-hexadecanoyl-sn-glycero-3-phosphocholine + hexadecanoyl-CoA = 1,2-dihexadecanoyl-sn-glycero-3-phosphocholine + CoA. The enzyme catalyses 1-O-hexadecyl-sn-glycero-3-phosphocholine + hexadecanoyl-CoA = 1-O-hexadecyl-2-hexadecanoyl-sn-glycero-3-phosphocholine + CoA. It catalyses the reaction a 1-O-(1Z-alkenyl)-sn-glycero-3-phosphocholine + hexadecanoyl-CoA = 1-O-(1Z)-alkenyl-2-hexadecanoyl-sn-glycero-3-phosphocholine + CoA. The catalysed reaction is 1-hexadecanoyl-sn-glycero-3-phospho-(1'-sn-glycerol) + hexadecanoyl-CoA = 1,2-dihexadecanoyl-sn-glycero-3-phospho-(1'-sn-glycerol) + CoA. It carries out the reaction 1-dodecanoyl-sn-glycero-3-phosphocholine + hexadecanoyl-CoA = 1-dodecanoyl-2-hexadecanoyl-sn-glycero-3-phosphocholine + CoA. The enzyme catalyses 1-tetradecanoyl-sn-glycero-3-phosphocholine + hexadecanoyl-CoA = 1-tetradecanoyl-2-hexadecanoyl-sn-glycero-3-phosphocholine + CoA. It catalyses the reaction 1-O-octadecyl-sn-glycero-3-phosphocholine + hexadecanoyl-CoA = 1-O-octadecyl-2-hexadecanoyl-sn-glycero-3-phosphocholine + CoA. The catalysed reaction is 1-octadecanoyl-sn-glycero-3-phosphocholine + hexadecanoyl-CoA = 1-octadecanoyl-2-hexadecanoyl-sn-glycero-3-phosphocholine + CoA. It carries out the reaction 1-(9Z-octadecenoyl)-sn-glycero-3-phosphocholine + hexadecanoyl-CoA = 1-(9Z-octadecenoyl)-2-hexadecanoyl-sn-glycero-3-phosphocholine + CoA. The enzyme catalyses 1-eicosanoyl-sn-glycero-3-phosphocholine + hexadecanoyl-CoA = 1-eicosanoyl-2-hexadecanoyl-sn-glycero-3-phosphocholine + CoA. It catalyses the reaction hexanoyl-CoA + 1-hexadecanoyl-sn-glycero-3-phosphocholine = 1-hexadecanoyl-2-hexanoyl-sn-glycero-3-phosphocholine + CoA. The catalysed reaction is octanoyl-CoA + 1-hexadecanoyl-sn-glycero-3-phosphocholine = 1-hexadecanoyl-2-octanoyl-sn-glycero-3-phosphocholine + CoA. It carries out the reaction decanoyl-CoA + 1-hexadecanoyl-sn-glycero-3-phosphocholine = 1-hexadecanoyl-2-decanoyl-sn-glycero-3-phosphocholine + CoA. The enzyme catalyses dodecanoyl-CoA + 1-hexadecanoyl-sn-glycero-3-phosphocholine = 1-hexadecanoyl-2-dodecanoyl-sn-glycero-3-phosphocholine + CoA. It catalyses the reaction tetradecanoyl-CoA + 1-hexadecanoyl-sn-glycero-3-phosphocholine = 1-hexadecanoyl-2-tetradecanoyl-sn-glycero-3-phosphocholine + CoA. The catalysed reaction is 1-hexadecanoyl-sn-glycero-3-phosphocholine + (9Z)-octadecenoyl-CoA = 1-hexadecanoyl-2-(9Z-octadecenoyl)-sn-glycero-3-phosphocholine + CoA. It carries out the reaction (9Z,12Z)-octadecadienoyl-CoA + 1-hexadecanoyl-sn-glycero-3-phosphocholine = 1-hexadecanoyl-2-(9Z,12Z-octadecadienoyl)-sn-glycero-3-phosphocholine + CoA. The enzyme catalyses (4Z,7Z,10Z,13Z,16Z,19Z)-docosahexaenoyl-CoA + 1-hexadecanoyl-sn-glycero-3-phosphocholine = 1-hexadecanoyl-2-(4Z,7Z,10Z,13Z,16Z,19Z-docosahexaenoyl)-sn-glycero-3-phosphocholine + CoA. It catalyses the reaction 1-hexadecanoyl-sn-glycero-3-phosphocholine + acetyl-CoA = 1-hexadecanoyl-2-acetyl-sn-glycero-3-phosphocholine + CoA. The catalysed reaction is eicosanoyl-CoA + 1-hexadecanoyl-sn-glycero-3-phosphocholine = 1-hexadecanoyl-2-eicosanoyl-sn-glycero-3-phosphocholine + CoA. It carries out the reaction 1-O-hexadecyl-sn-glycero-3-phosphocholine + acetyl-CoA = 1-O-hexadecyl-2-acetyl-sn-glycero-3-phosphocholine + CoA. The enzyme catalyses a 1-acyl-sn-glycero-3-phosphocholine + hexadecanoyl-CoA = 1-acyl-2-hexadecanoyl-sn-glycero-3-phosphocholine + CoA. It catalyses the reaction a 1-acyl-sn-glycero-3-phosphate + hexadecanoyl-CoA = 1-acyl-2-hexadecanoyl-sn-glycero-3-phosphate + CoA. The catalysed reaction is 1-acyl-sn-glycero-3-phospho-(1'-sn-glycerol) + hexadecanoyl-CoA = 1-acyl-2-hexadecanoyl-sn-glycero-3-phospho-(1'-sn-glycerol) + CoA. It functions in the pathway lipid metabolism; phospholipid metabolism. Not activated by inflammatory stimulation. Inhibited by Cu(2+), Fe(2+), Ca(2+) and Mg(2+). Activity is not affected by Co(2+) or Mn(2+). In terms of biological role, exhibits both acyltransferase and acetyltransferase activities. Activity is calcium-independent. Catalyzes the conversion of lysophosphatidylcholine (1-acyl-sn-glycero-3-phosphocholine or LPC) into phosphatidylcholine (1,2-diacyl-sn-glycero-3-phosphocholine or PC). Catalyzes the conversion 1-acyl-sn-glycerol-3-phosphate (lysophosphatidic acid or LPA) into 1,2-diacyl-sn-glycerol-3-phosphate (phosphatidic acid or PA) by incorporating an acyl moiety at the sn-2 position of the glycerol backbone. Displays a clear preference for saturated fatty acyl-CoAs, and 1-myristoyl or 1-palmitoyl LPC as acyl donors and acceptors, respectively. Involved in platelet-activating factor (PAF) biosynthesis by catalyzing the conversion of the PAF precursor, 1-O-alkyl-sn-glycero-3-phosphocholine (lyso-PAF) into 1-O-alkyl-2-acetyl-sn-glycero-3-phosphocholine (PAF). May synthesize phosphatidylcholine in pulmonary surfactant, thereby playing a pivotal role in respiratory physiology. Involved in the regulation of lipid droplet number and size. This is Lysophosphatidylcholine acyltransferase 1 (Lpcat1) from Mus musculus (Mouse).